The primary structure comprises 305 residues: Orotidine 5'-phosphate decarboxylase (305 aa).

Lysine 108 serves as the catalytic Proton donor.

The protein belongs to the OMP decarboxylase family. Type 2 subfamily.

It carries out the reaction orotidine 5'-phosphate + H(+) = UMP + CO2. Its pathway is pyrimidine metabolism; UMP biosynthesis via de novo pathway; UMP from orotate: step 2/2. In Caldicellulosiruptor saccharolyticus (strain ATCC 43494 / DSM 8903 / Tp8T 6331), this protein is Orotidine 5'-phosphate decarboxylase.